Here is a 1582-residue protein sequence, read N- to C-terminus: Alpha-2-macroglobulin (1582 aa).

The first 15 residues, 1-15, serve as a signal peptide directing secretion; the sequence is MICLAALAVAVPARA. The segment at residues 1080-1083 is a cross-link (isoglutamyl cysteine thioester (Cys-Gln)); the sequence is CAEQ.

Belongs to the protease inhibitor I39 (alpha-2-macroglobulin) family. Bacterial alpha-2-macroglobulin subfamily.

In terms of biological role, protects the bacterial cell from host peptidases. The polypeptide is Alpha-2-macroglobulin (Ralstonia nicotianae (strain ATCC BAA-1114 / GMI1000) (Ralstonia solanacearum)).